Here is a 218-residue protein sequence, read N- to C-terminus: MEKSGLVAKEGYPFMAIFIGVAAVSSALSWYGIVQFVLWVLAGWCIWFFRDPERHSDAPEDAVIAPADGRVVAIREMEKGPLTDEPVRMVSIFMNVFNVHVNRAPIAGTVTKISYHPGKFVNADLDKASIENERNVLLMESPAGVKMAFQQVAGLVARRIVCRINEGTVLQRGERFGLIRFGSRVDLFFPMDAEISVKLGEMTHSGVTQMGRLKGKES.

Serine 183 functions as the Schiff-base intermediate with substrate; via pyruvic acid in the catalytic mechanism. Serine 183 is modified (pyruvic acid (Ser); by autocatalysis).

Belongs to the phosphatidylserine decarboxylase family. PSD-A subfamily. In terms of assembly, heterodimer of a large membrane-associated beta subunit and a small pyruvoyl-containing alpha subunit. Requires pyruvate as cofactor. Post-translationally, is synthesized initially as an inactive proenzyme. Formation of the active enzyme involves a self-maturation process in which the active site pyruvoyl group is generated from an internal serine residue via an autocatalytic post-translational modification. Two non-identical subunits are generated from the proenzyme in this reaction, and the pyruvate is formed at the N-terminus of the alpha chain, which is derived from the carboxyl end of the proenzyme. The post-translation cleavage follows an unusual pathway, termed non-hydrolytic serinolysis, in which the side chain hydroxyl group of the serine supplies its oxygen atom to form the C-terminus of the beta chain, while the remainder of the serine residue undergoes an oxidative deamination to produce ammonia and the pyruvoyl prosthetic group on the alpha chain.

It is found in the cell membrane. It carries out the reaction a 1,2-diacyl-sn-glycero-3-phospho-L-serine + H(+) = a 1,2-diacyl-sn-glycero-3-phosphoethanolamine + CO2. The protein operates within phospholipid metabolism; phosphatidylethanolamine biosynthesis; phosphatidylethanolamine from CDP-diacylglycerol: step 2/2. In terms of biological role, catalyzes the formation of phosphatidylethanolamine (PtdEtn) from phosphatidylserine (PtdSer). The protein is Phosphatidylserine decarboxylase proenzyme of Magnetococcus marinus (strain ATCC BAA-1437 / JCM 17883 / MC-1).